A 390-amino-acid polypeptide reads, in one-letter code: ATP-sensitive inward rectifier potassium channel 11 (390 aa).

Topologically, residues 1-65 (MLSRKGIIPE…LQDVFTTLVD (65 aa)) are cytoplasmic. Asn48 and Arg50 together coordinate ATP. Residues 66–92 (LKWTHTLLIFTMSFLCSWLLFAMVWWL) form a helical membrane-spanning segment. At 93-116 (IAFAHGDLAPGEGAAVPCVTSIHS) the chain is on the extracellular side. An intrachain disulfide couples Cys110 to Cys142. The discontinuously helical; Pore-forming intramembrane region spans 117 to 133 (FSSAFLFSIEVQVTIGF). The K(+) site is built by Thr130 and Phe133. A Selectivity filter motif is present at residues 130–135 (TIGFGG). The Extracellular segment spans residues 134–142 (GGRMVTEEC). Residues 143–171 (PLAILILIVQNIVGLMINAIMLGCIFMKT) form a helical membrane-spanning segment. At 172–390 (AQAHRRAETL…KFSISPDSLS (219 aa)) the chain is on the cytoplasmic side. A 1,2-diacyl-sn-glycero-3-phospho-(1D-myo-inositol-4,5-bisphosphate) is bound at residue Arg176. Tyr330 serves as a coordination point for ATP. Thr341 bears the Phosphothreonine; by MAPK1 mark. Ser385 is subject to Phosphoserine; by MAPK1.

Belongs to the inward rectifier-type potassium channel (TC 1.A.2.1) family. KCNJ11 subfamily. In terms of assembly, homotetramer; the homotetramer binds four ATP molecules (one ATP per subunit). Forms an heterooctamer with ABCC8/SUR1; one KCNJ11 homotetramer interacts with four ABCC8/SUR1 molecules. Interacts with ABCC9/SUR2. Post-translationally, phosphorylation by MAPK1 results in changes in channel gating that destabilize the closed states and reduce the ATP sensitivity.

The protein resides in the membrane. It catalyses the reaction K(+)(in) = K(+)(out). With respect to regulation, KATP channels are regulated by cytoplasmic ATP/ADP ratios; ATP inhibits the channel by closing the pore, while ADP activates the channel. Activated by phosphatidylinositol 4,5-biphosphate (PtdIns(4,5)P2). Functionally, inward rectifier potassium channel that forms the pore of ATP-sensitive potassium channels (KATP), regulating potassium permeability as a function of cytoplasmic ATP and ADP concentrations in many different cells. Inward rectifier potassium channels are characterized by a greater tendency to allow potassium to flow into the cell rather than out of it. Their voltage dependence is regulated by the concentration of extracellular potassium; as external potassium is raised, the voltage range of the channel opening shifts to more positive voltages. The inward rectification is mainly due to the blockage of outward current by internal magnesium. Can be blocked by extracellular barium. In pancreatic cells, it forms KATP channels with ABCC8/SUR1. Can form cardiac and smooth muscle-type KATP channels with ABCC9. The chain is ATP-sensitive inward rectifier potassium channel 11 (KCNJ11) from Oryctolagus cuniculus (Rabbit).